A 711-amino-acid chain; its full sequence is Zinc finger CCCH domain-containing protein 32 (711 aa).

A compositionally biased stretch (low complexity) spans 1–21 (MEADGAAAAAAAGEASTEAGA). The tract at residues 1–23 (MEADGAAAAAAAGEASTEAGARP) is disordered. 3 C3H1-type zinc fingers span residues 31-60 (LRRNTDCVYFLASPLTCKKGNECDFRHSDN), 62-88 (RMNPRDCWYWLNSNCLNPKCPFRHPPI), and 112-139 (GKQLVPCYYFKKGNCLKGDRCAFYHGPQ). 4 disordered regions span residues 221–246 (KSEKVKSSTPAALKESFTTSSGGDHP), 339–376 (RFNGMDEQDQMGHMYDGYERKRRRSSERSMERPFHSER), 405–561 (SSLA…EGPK), and 573–701 (AAWA…DDDD). Basic and acidic residues-rich tracts occupy residues 364 to 376 (SERSMERPFHSER) and 413 to 427 (RNGEQRRRDERYRER). The span at 428–437 (AHGHRSHRDH) shows a compositional bias: basic residues. Basic and acidic residues-rich tracts occupy residues 460–509 (SPDR…RRSS) and 585–594 (KQDKSAEVSH). Composition is skewed to acidic residues over residues 648–663 (EDIIEVDPVENQDADN) and 686–701 (ENAYEDDDEEYDDDDD).

This chain is Zinc finger CCCH domain-containing protein 32, found in Oryza sativa subsp. japonica (Rice).